We begin with the raw amino-acid sequence, 259 residues long: MLSKRIIPCLDVRAGRLTKGVKFEGNVDIGDPVATARRYYEEGADEIVFYDITASHEDRGIFLDVVERVASEIFIPFSVGGGINTVDDMRAVLMAGAEKVSVNSGAVKTPDIISQGAAAFGSQAIVVGMDVKQVEKSATIPSGYEIVIHGGRKYMGMDAIEWAKTCESLGAGELCVNSIDADGTKDGYELTLTRMISDAVTIPVIASGGAGSPEHMYDALTRGGASAALIASIVHYGTYTIPDLKRRISGMGAKMRMVW.

Active-site residues include aspartate 11 and aspartate 130.

It belongs to the HisA/HisF family. Heterodimer of HisH and HisF.

The protein resides in the cytoplasm. It catalyses the reaction 5-[(5-phospho-1-deoxy-D-ribulos-1-ylimino)methylamino]-1-(5-phospho-beta-D-ribosyl)imidazole-4-carboxamide + L-glutamine = D-erythro-1-(imidazol-4-yl)glycerol 3-phosphate + 5-amino-1-(5-phospho-beta-D-ribosyl)imidazole-4-carboxamide + L-glutamate + H(+). It functions in the pathway amino-acid biosynthesis; L-histidine biosynthesis; L-histidine from 5-phospho-alpha-D-ribose 1-diphosphate: step 5/9. In terms of biological role, IGPS catalyzes the conversion of PRFAR and glutamine to IGP, AICAR and glutamate. The HisF subunit catalyzes the cyclization activity that produces IGP and AICAR from PRFAR using the ammonia provided by the HisH subunit. The protein is Imidazole glycerol phosphate synthase subunit HisF of Nitratidesulfovibrio vulgaris (strain DP4) (Desulfovibrio vulgaris).